We begin with the raw amino-acid sequence, 179 residues long: Large ribosomal subunit protein uL5 (179 aa).

This sequence belongs to the universal ribosomal protein uL5 family. As to quaternary structure, part of the 50S ribosomal subunit; part of the 5S rRNA/L5/L18/L25 subcomplex. Contacts the 5S rRNA and the P site tRNA. Forms a bridge to the 30S subunit in the 70S ribosome.

In terms of biological role, this is one of the proteins that bind and probably mediate the attachment of the 5S RNA into the large ribosomal subunit, where it forms part of the central protuberance. In the 70S ribosome it contacts protein S13 of the 30S subunit (bridge B1b), connecting the 2 subunits; this bridge is implicated in subunit movement. Contacts the P site tRNA; the 5S rRNA and some of its associated proteins might help stabilize positioning of ribosome-bound tRNAs. The polypeptide is Large ribosomal subunit protein uL5 (Geobacillus sp. (strain WCH70)).